The sequence spans 224 residues: MDQFIKQDETGDLIETGMNVANHFLSAPIQGTNSLSKATIIPGVAPVLIGNPEQKNIQYPTASHQGSKSKGRGSGAKPIIVSSSEGGTGGTQIPEPLFAQTGQGGVVTTVYQDPTIQPTGSYRSVELAKIGKERMINRFVEKPRTSTPVTEFKRGAGNGSPRPDNPRGGHRREWSLSWVQGEVRVFEWCNPICSPITAAARFHSCKCGNCPAKCDQCERDYGPP.

Disordered stretches follow at residues 57-98 (IQYP…EPLF) and 144-172 (RTST…GHRR). Zn(2+)-binding residues include H170, C189, C193, C205, C207, C210, C214, and C217.

The protein belongs to the paramyxoviruses V protein family. In terms of assembly, interacts with host IFIH1/MDA5 and DHX58/LGP2. Forms with host DDB1, CUL4A, STAT1, STAT2 and STAT3 the mumps virus V-dependent complex (VDC).

It is found in the virion. Its subcellular location is the host cytoplasm. In terms of biological role, plays an essential role in the inhibition of host immune response. Prevents the establishment of cellular antiviral state by blocking interferon-alpha/beta (IFN-alpha/beta) production and signaling pathway. Interacts with host IFIH1/MDA5 and DHX58/LGP2 to inhibit the transduction pathway involved in the activation of IFN-beta promoter, thus protecting the virus against cell antiviral state. Blocks the type I and II interferon signaling pathways by interacting with host STAT1, STAT2 and STAT3, and mediating their ubiquitination and subsequent proteasomal degradation. This chain is Non-structural protein V, found in Mumps virus genotype N (strain L-Zagreb vaccine) (MuV).